The sequence spans 551 residues: DNA mismatch repair protein MutL (551 aa).

Belongs to the DNA mismatch repair MutL/HexB family.

In terms of biological role, this protein is involved in the repair of mismatches in DNA. It is required for dam-dependent methyl-directed DNA mismatch repair. May act as a 'molecular matchmaker', a protein that promotes the formation of a stable complex between two or more DNA-binding proteins in an ATP-dependent manner without itself being part of a final effector complex. The chain is DNA mismatch repair protein MutL from Thermosipho melanesiensis (strain DSM 12029 / CIP 104789 / BI429).